The primary structure comprises 118 residues: Vesicle-associated membrane protein 1 (118 aa).

Residues 1–15 show a composition bias toward low complexity; that stretch reads MSAPAQPPTEGAEGA. The disordered stretch occupies residues 1–36; that stretch reads MSAPAQPPTEGAEGAAPGGGPPGPPPNMTSNRRLQQ. Over 1-96 the chain is Cytoplasmic; that stretch reads MSAPAQPPTE…KRKYWWKNCK (96 aa). The v-SNARE coiled-coil homology domain occupies 33–93; it reads RLQQTQAQVE…AKLKRKYWWK (61 aa). Ser-63 is subject to Phosphoserine. Residues 97 to 116 traverse the membrane as a helical; Anchor for type IV membrane protein segment; it reads MMIMLGAICAIIVVVIVIYF. Over 117–118 the chain is Vesicular; sequence FA.

It belongs to the synaptobrevin family. In terms of assembly, interacts with VAPA and VAPB.

It localises to the cytoplasmic vesicle. It is found in the secretory vesicle. Its subcellular location is the synaptic vesicle membrane. The protein resides in the synapse. The protein localises to the synaptosome. It localises to the cytoplasmic vesicle membrane. Involved in the targeting and/or fusion of transport vesicles to their target membrane. The sequence is that of Vesicle-associated membrane protein 1 (VAMP1) from Bos taurus (Bovine).